The sequence spans 352 residues: Keratocan (352 aa).

An N-terminal signal peptide occupies residues 1–20 (MAGTICFIMWVLFITDTVWS). One can recognise an LRRNT domain in the interval 33–71 (DDWTIHDFECPMECFCPPSFPTALYCENRGLKEIPAIPS). 2 disulfides stabilise this stretch: C42–C48 and C46–C58. 10 LRR repeats span residues 72–93 (RIWY…PFEN), 96–117 (QLRW…KGAL), 122–142 (KLLF…PLPR), 143–164 (SLEQ…TFSN), 167–180 (NLTL…KLVD), 193–213 (NLMQ…RLPA), 214–235 (NTMQ…YFNV), 238–258 (KVAF…PSRG), 263–282 (SILD…RISA), and 283–304 (HLQH…VICP). N93 carries N-linked (GlcNAc...) (keratan sulfate) asparagine glycosylation. N-linked (GlcNAc...) (keratan sulfate) asparagine glycosylation is present at N167. N222 carries an N-linked (GlcNAc...) asparagine glycan. N-linked (GlcNAc...) asparagine glycosylation is present at N298. C303 and C343 are oxidised to a cystine.

Belongs to the small leucine-rich proteoglycan (SLRP) family. SLRP class II subfamily. In terms of processing, binds keratan sulfate chains. As to expression, cornea (at protein level). Increased expression in the stroma of keratoconus corneas. Also detected in trachea, and in low levels, in intestine, skeletal muscle, ovary, lung and putamen.

The protein localises to the secreted. It is found in the extracellular space. It localises to the extracellular matrix. Functionally, may be important in developing and maintaining corneal transparency and for the structure of the stromal matrix. This chain is Keratocan (KERA), found in Homo sapiens (Human).